We begin with the raw amino-acid sequence, 88 residues long: UPF0297 protein Bcer98_3100 (88 aa).

Belongs to the UPF0297 family.

The protein is UPF0297 protein Bcer98_3100 of Bacillus cytotoxicus (strain DSM 22905 / CIP 110041 / 391-98 / NVH 391-98).